The primary structure comprises 24 residues: N-acyl-L-amino acid amidohydrolase (24 aa).

It belongs to the peptidase M20 family. As to quaternary structure, homotetramer. Requires Co(2+) as cofactor.

It carries out the reaction an N-acyl-L-amino acid + H2O = an L-alpha-amino acid + a carboxylate. The enzyme catalyses an N-acetyl-L-cysteine-S-conjugate + H2O = an S-substituted L-cysteine + acetate. This is N-acyl-L-amino acid amidohydrolase from Parageobacillus thermoglucosidasius (Geobacillus thermoglucosidasius).